The sequence spans 192 residues: GTP cyclohydrolase 1 (192 aa).

Residues Cys-81, His-84, and Cys-153 each contribute to the Zn(2+) site.

It belongs to the GTP cyclohydrolase I family. In terms of assembly, toroid-shaped homodecamer, composed of two pentamers of five dimers.

It catalyses the reaction GTP + H2O = 7,8-dihydroneopterin 3'-triphosphate + formate + H(+). It functions in the pathway cofactor biosynthesis; 7,8-dihydroneopterin triphosphate biosynthesis; 7,8-dihydroneopterin triphosphate from GTP: step 1/1. This is GTP cyclohydrolase 1 from Streptococcus mutans serotype c (strain ATCC 700610 / UA159).